Here is a 607-residue protein sequence, read N- to C-terminus: Glycerophosphodiester phosphodiesterase domain-containing protein 5 (607 aa).

The Cytoplasmic segment spans residues 1–42; that stretch reads MVRHQPLQYYEPQLCLSCLTGIYGCRWKRYQRSHDDTTPWER. Disulfide bonds link Cys15/Cys18 and Cys25/Cys571. A helical transmembrane segment spans residues 43-63; that stretch reads LWFLLLVCTFSLTLTWLYFWW. The Extracellular portion of the chain corresponds to 64 to 89; sequence GVHNDYDEFNWYLYNRMGYWSDWSVP. A helical membrane pass occupies residues 90–110; that stretch reads ILVTSAAAFTYIAGLLVLALC. Topologically, residues 111 to 125 are cytoplasmic; sequence HIAVGQQLNLHWIHK. Residues 126 to 146 traverse the membrane as a helical segment; sequence MGLVVILASTVVAMSAVAQLW. Residues 147-160 are Extracellular-facing; the sequence is EDEWEVLLISLQGT. Residues 161 to 181 traverse the membrane as a helical segment; that stretch reads APFLHIGALVAITALSWIVAG. Residues 182 to 192 are Cytoplasmic-facing; it reads QFARAERSSSQ. The chain crosses the membrane as a helical span at residues 193 to 213; it reads LTILCTFFAVVFTFYLIPLTI. Topologically, residues 214–496 are extracellular; sequence SSPCIMEKKD…PLWIMPPDEY (283 aa). A GP-PDE domain is found at 228–485; the sequence is PALIGHRGAP…DNSHTLSRVP (258 aa). N-linked (GlcNAc...) asparagine glycans are attached at residues Asn301, Asn336, Asn352, Asn374, and Asn448. The chain crosses the membrane as a helical span at residues 497–517; that stretch reads CLMWVTADLISFSLIIGIFVL. Residues 518–607 are Cytoplasmic-facing; it reads QKWRLGGIRS…AKTVTEQSGH (90 aa). Positions 582-607 are disordered; the sequence is ANSTATPVGPRNAGSRAKTVTEQSGH.

The protein belongs to the glycerophosphoryl diester phosphodiesterase family. Interacts with PRDX1; forms a mixed-disulfide with PRDX1, leading to disrupt intramolecular disulfide bond between Cys-25 and Cys-571. In terms of processing, intramolecular disulfide bond between Cys-25 and Cys-571 is reduced by PRDX1. Detected in brain, lung, heart, kidney and testis.

It is found in the endomembrane system. It localises to the cytoplasm. The protein localises to the perinuclear region. The protein resides in the cell projection. Its subcellular location is the growth cone. The enzyme catalyses a 1,2-diacyl-sn-glycero-3-phospho-(1D-myo-inositol-4,5-bisphosphate) + H2O = 1D-myo-inositol 1,4,5-trisphosphate + a 1,2-diacyl-sn-glycerol + H(+). The catalysed reaction is sn-glycerol 3-phosphocholine + H2O = sn-glycerol 3-phosphate + choline + H(+). Its activity is regulated as follows. Inhibited by high level of NaCl or urea. Its function is as follows. Glycerophosphodiester phosphodiesterase that promotes neurite formation and drives spinal motor neuron differentiation. Mediates the cleavage of glycosylphosphatidylinositol (GPI) anchor of target proteins: removes the GPI-anchor of RECK, leading to release RECK from the plasma membrane. May contribute to the osmotic regulation of cellular glycerophosphocholine. In Mus musculus (Mouse), this protein is Glycerophosphodiester phosphodiesterase domain-containing protein 5.